Here is a 397-residue protein sequence, read N- to C-terminus: Acetate kinase (397 aa).

N8 lines the Mg(2+) pocket. Position 15 (K15) interacts with ATP. R92 is a substrate binding site. The active-site Proton donor/acceptor is the D149. Residues 209 to 213 (HLGNG), 283 to 285 (DFR), and 331 to 335 (GVGEN) each bind ATP. E385 contributes to the Mg(2+) binding site.

It belongs to the acetokinase family. As to quaternary structure, homodimer. Mg(2+) is required as a cofactor. It depends on Mn(2+) as a cofactor.

Its subcellular location is the cytoplasm. The enzyme catalyses acetate + ATP = acetyl phosphate + ADP. It participates in metabolic intermediate biosynthesis; acetyl-CoA biosynthesis; acetyl-CoA from acetate: step 1/2. In terms of biological role, catalyzes the formation of acetyl phosphate from acetate and ATP. Can also catalyze the reverse reaction. In Corynebacterium glutamicum (strain R), this protein is Acetate kinase.